The sequence spans 174 residues: UPF0664 stress-induced protein C29B12.11c (174 aa).

A disordered region spans residues 147-174 (HLDPLPPYHRPSSSQDQPPHYEEAVNKS). Over residues 165–174 (PHYEEAVNKS) the composition is skewed to basic and acidic residues.

This sequence belongs to the UPF0664 family.

Its subcellular location is the cytoplasm. It is found in the nucleus. In Schizosaccharomyces pombe (strain 972 / ATCC 24843) (Fission yeast), this protein is UPF0664 stress-induced protein C29B12.11c.